A 508-amino-acid polypeptide reads, in one-letter code: UDP-N-acetylmuramoyl-L-alanyl-D-glutamate--2,6-diaminopimelate ligase (508 aa).

Residue S43 coordinates UDP-N-acetyl-alpha-D-muramoyl-L-alanyl-D-glutamate. 124–130 (GTNGKTT) lines the ATP pocket. Residues 166–167 (TT), S193, and R201 each bind UDP-N-acetyl-alpha-D-muramoyl-L-alanyl-D-glutamate. Residue K233 is modified to N6-carboxylysine. Meso-2,6-diaminopimelate contacts are provided by residues R404, 428–431 (DNPR), G478, and E482. Residues 428 to 431 (DNPR) carry the Meso-diaminopimelate recognition motif motif.

Belongs to the MurCDEF family. MurE subfamily. It depends on Mg(2+) as a cofactor. Post-translationally, carboxylation is probably crucial for Mg(2+) binding and, consequently, for the gamma-phosphate positioning of ATP.

It is found in the cytoplasm. The catalysed reaction is UDP-N-acetyl-alpha-D-muramoyl-L-alanyl-D-glutamate + meso-2,6-diaminopimelate + ATP = UDP-N-acetyl-alpha-D-muramoyl-L-alanyl-gamma-D-glutamyl-meso-2,6-diaminopimelate + ADP + phosphate + H(+). The protein operates within cell wall biogenesis; peptidoglycan biosynthesis. Its function is as follows. Catalyzes the addition of meso-diaminopimelic acid to the nucleotide precursor UDP-N-acetylmuramoyl-L-alanyl-D-glutamate (UMAG) in the biosynthesis of bacterial cell-wall peptidoglycan. The sequence is that of UDP-N-acetylmuramoyl-L-alanyl-D-glutamate--2,6-diaminopimelate ligase from Chlorobaculum tepidum (strain ATCC 49652 / DSM 12025 / NBRC 103806 / TLS) (Chlorobium tepidum).